A 198-amino-acid polypeptide reads, in one-letter code: Cyclin-dependent kinase inhibitor 1B (198 aa).

Residues 1–11 (MSNVRVSNGSP) are compositionally biased toward polar residues. The tract at residues 1 to 34 (MSNVRVSNGSPSLERMDARQAEHPKPSACRNLFG) is disordered. Ser10 carries the post-translational modification Phosphoserine; by UHMK1. The span at 14–25 (ERMDARQAEHPK) shows a compositional bias: basic and acidic residues. Residues 51-91 (DMEEASQRKWNFDFQNHNPLEGRYQWQEVDKGSLPEFYYRP) are interaction with CDK2. A Phosphotyrosine; by SRC modification is found at Tyr74. The disordered stretch occupies residues 85-198 (PEFYYRPPRP…KKPGLRRHQT (114 aa)). Tyr88 carries the post-translational modification Phosphotyrosine; by ABL, LYN and SRC. Tyr89 carries the phosphotyrosine modification. A compositionally biased stretch (polar residues) spans 104-124 (QESQDVSGSRQAVPSIGSQAY). Residues 153–169 (KRPAADDSSSQNKRANR) carry the Nuclear localization signal motif. Residue Thr170 is modified to Phosphothreonine. Positions 175–186 (SDGSLNAGSVEQ) are enriched in polar residues. Thr187 bears the Phosphothreonine; by PKB/AKT1, CDK1 and CDK2 mark. At Thr198 the chain carries Phosphothreonine; by CaMK1, PKB/AKT1, RPS6KA1, RPS6KA3 and PIM1.

This sequence belongs to the CDI family. In terms of assembly, forms a ternary complex composed of CCNE1, CDK2 and CDKN1B. Interacts directly with CCNE1; the interaction is inhibited by CDK2-dependent phosphorylation on Thr-187. Interacts with COPS5, subunit of the COP9 signalosome complex; the interaction leads to CDKN1B degradation. Interacts with NUP50; the interaction leads to nuclear import and degradation of phosphorylated CDKN1B. Interacts with CCND1 and SNX6. Interacts (Thr-198-phosphorylated form) with 14-3-3 proteins, binds strongly YWHAQ, weakly YWHAE and YWHAH, but not YWHAB nor YWHAZ; the interaction with YWHAQ results in translocation to the cytoplasm. Interacts with AKT1 and LYN; the interactions lead to cytoplasmic mislocation, phosphorylation of CDKN1B and inhibition of cell cycle arrest. Forms a ternary complex with CCNA2 and CDK2; CDKN1B inhibits the kinase activity of CDK2 through conformational rearrangements. Interacts (unphosphorylated form) with CDK2. Forms a complex with CDK2 and SPDYA, but does not directly interact with SPDYA. Forms a ternary complex composed of cyclin D, CDK4 and CDKN1B. Interacts (phosphorylated on Tyr-88 and Tyr-89) with CDK4; the interaction is required for cyclin D and CDK4 complex assembly, induces nuclear translocation and activates the CDK4 kinase activity. Interacts with GRB2. Interacts with PIM1. Identified in a complex with SKP1, SKP2 and CKS1B. Interacts with UHMK1; the interaction leads to cytoplasmic mislocation, phosphorylation of CDKN1B and inhibition of cell cycle arrest. Also interacts with CDK1. Dephosphorylated on Thr-187 by PPM1H, leading to CDKN1B stability. Phosphorylated; phosphorylation occurs on serine, threonine and tyrosine residues. Phosphorylation on Ser-10 is the major site of phosphorylation in resting cells, takes place at the G(0)-G(1) phase and leads to protein stability. Phosphorylation on other sites is greatly enhanced by mitogens, growth factors, cMYC and in certain cancer cell lines. The phosphorylated form found in the cytoplasm is inactivate. Phosphorylation on Thr-198 is required for interaction with 14-3-3 proteins. Phosphorylation on Thr-187, by CDK1 and CDK2 leads to protein ubiquitination and proteasomal degradation. Tyrosine phosphorylation promotes this process. Phosphorylation by PKB/AKT1 can be suppressed by LY294002, an inhibitor of the catalytic subunit of PI3K. Phosphorylation on Tyr-88 and Tyr-89 has no effect on binding CDK2, but is required for binding CDK4. Dephosphorylated on tyrosine residues by G-CSF. Dephosphorylated on Thr-187 by PPM1H, leading to CDKN1B stability. Post-translationally, ubiquitinated; in the cytoplasm by the KPC complex (composed of RNF123/KPC1 and UBAC1/KPC2) and, in the nucleus, by SCF(SKP2). The latter requires prior phosphorylation on Thr-187. Ubiquitinated; by a TRIM21-containing SCF(SKP2)-like complex; leads to its degradation. In terms of processing, subject to degradation in the lysosome. Interaction with SNX6 promotes lysosomal degradation.

Its subcellular location is the nucleus. The protein resides in the cytoplasm. It localises to the endosome. In terms of biological role, important regulator of cell cycle progression. Inhibits the kinase activity of CDK2 bound to cyclin A, but has little inhibitory activity on CDK2 bound to SPDYA. Involved in G1 arrest. Potent inhibitor of cyclin E- and cyclin A-CDK2 complexes. Forms a complex with cyclin type D-CDK4 complexes and is involved in the assembly, stability, and modulation of CCND1-CDK4 complex activation. Acts either as an inhibitor or an activator of cyclin type D-CDK4 complexes depending on its phosphorylation state and/or stoichometry. The polypeptide is Cyclin-dependent kinase inhibitor 1B (CDKN1B) (Cricetulus griseus (Chinese hamster)).